The sequence spans 360 residues: Phospho-N-acetylmuramoyl-pentapeptide-transferase (360 aa).

A run of 10 helical transmembrane segments spans residues 18 to 38 (VFSYLTFRAIVSLLTALFLSL), 72 to 92 (PTMGGIMILTSITVSVLMWAY), 94 to 114 (SNPYVWCVLFVLVGYGIVGFV), 132 to 152 (WKYFWQSVIALVVAFAMYAVG), 168 to 188 (IMPQLGLLYVLLAYFVIVGTS), 199 to 219 (GLAIMPTVFVAAGFALVAWAT), 236 to 256 (AGELVIVCTAIVGAGLGFLWF), 263 to 283 (VFMGDVGSLALGGALGTIAVL), 288 to 308 (FLLLIMGGVFVVETLSVILQV), and 338 to 358 (VIVRFWIISLMLVLIGLATLK).

Belongs to the glycosyltransferase 4 family. MraY subfamily. Mg(2+) is required as a cofactor.

The protein localises to the cell inner membrane. The enzyme catalyses UDP-N-acetyl-alpha-D-muramoyl-L-alanyl-gamma-D-glutamyl-meso-2,6-diaminopimeloyl-D-alanyl-D-alanine + di-trans,octa-cis-undecaprenyl phosphate = di-trans,octa-cis-undecaprenyl diphospho-N-acetyl-alpha-D-muramoyl-L-alanyl-D-glutamyl-meso-2,6-diaminopimeloyl-D-alanyl-D-alanine + UMP. It participates in cell wall biogenesis; peptidoglycan biosynthesis. Functionally, catalyzes the initial step of the lipid cycle reactions in the biosynthesis of the cell wall peptidoglycan: transfers peptidoglycan precursor phospho-MurNAc-pentapeptide from UDP-MurNAc-pentapeptide onto the lipid carrier undecaprenyl phosphate, yielding undecaprenyl-pyrophosphoryl-MurNAc-pentapeptide, known as lipid I. The chain is Phospho-N-acetylmuramoyl-pentapeptide-transferase from Serratia proteamaculans (strain 568).